The following is an 854-amino-acid chain: MAIQTRFASGTSLSDLKPKPSATSISIPMQNVMNKPVTEQDSLFHICANIRKRLEVLPQLKPFLQLAYQSSEVLSERQSLLLSQKQHQELLKSNGANRDSSDLAPTLRSSSISTATSLMSMEGISYTNSNPSATPNMEDTLLTFSMGILPITMDCDPVTQLSQLFQQGAPLCILFNSVKPQFKLPVIASDDLKVCKKSIYDFILGCKKHFAFNDEELFTISDVFANSTSQLVKVLEVVETLMNSSPTIFPSKSKTQQIMNAENQHRHQPQQSSKKHNEYVKIIKEFVATERKYVHDLEILDKYRQQLLDSNLITSEELYMLFPNLGDAIDFQRRFLISLEINALVEPSKQRIGALFMHSKHFFKLYEPWSIGQNAAIEFLSSTLHKMRVDESQRFIINNKLELQSFLYKPVQRLCRYPLLVKELLAESSDDNNTKELEAALDISKNIARSINENQRRTENHQVVKKLYGRVVNWKGYRISKFGELLYFDKVFISTTNSSSEPEREFEVYLFEKIIILFSEVVTKKSASSLILKKKSSTSASISASNITDNNGSPHHSYHKRHSNSSSSNNIHLSSSSAAAIIHSSTNSSDNNSNNSSSSSLFKLSANEPKLDLRGRIMIMNLNQIIPQNNRSLNITWESIKEQGNFLLKFKNEETRDNWSSCLQQLIHDLKNEQFKARHHSSTSTTSSTAKSSSMMSPTTTMNTPNHHNSRQTHDSMASFSSSHMKRVSDVLPKRRTTSSSFESEIKSISENFKNSIPESSILFRISYNNNSNNTSSSEIFTLLVEKVWNFDDLIMAINSKISNTHNNNISPITKIKYQDEDGDFVVLGSDEDWNVAKEMLAENNEKFLNIRLY.

Polar residues predominate over residues 1-14 (MAIQTRFASGTSLS). The disordered stretch occupies residues 1–24 (MAIQTRFASGTSLSDLKPKPSATS). Residues 135 to 246 (PNMEDTLLTF…VVETLMNSSP (112 aa)) enclose the Calponin-homology (CH) domain. The 177-residue stretch at 278–454 (EYVKIIKEFV…KNIARSINEN (177 aa)) folds into the DH domain. Positions 478–668 (RISKFGELLY…WSSCLQQLIH (191 aa)) constitute a PH domain. Disordered stretches follow at residues 542–571 (ISAS…SNNI) and 674–745 (QFKA…FESE). A compositionally biased stretch (low complexity) spans 682 to 707 (STSTTSSTAKSSSMMSPTTTMNTPNH). The PB1 domain occupies 761–854 (SILFRISYNN…NEKFLNIRLY (94 aa)).

As to quaternary structure, interacts with AXL2.

Functionally, promotes the exchange of CDC42-bound GDP by GTP. Controls the polarity of calmodulin, and the calcium regulatory process of bud emergence. CDC24 may be involved in the initial selection and organization of the budding site. This Saccharomyces cerevisiae (strain ATCC 204508 / S288c) (Baker's yeast) protein is Cell division control protein 24 (CDC24).